A 157-amino-acid chain; its full sequence is MIAIYPGSFDPITLGHLDIIERGVVLFEKVIVTVMYNPNKRPLFPVEKRIEQITKCTQHLPGVEVDSYKGLTVDYAKLRKAQVLLRGLRVLSDFEKELQMAHTNKTLAEDVQTIFLATNKEYSFLSSSTVKEIAQFGGSVSHMVPENVLRDLREYYR.

Ser-8 contributes to the substrate binding site. ATP contacts are provided by residues 8 to 9 (SF) and His-16. 3 residues coordinate substrate: Lys-40, Thr-72, and Arg-86. ATP-binding positions include 87-89 (GLR), Glu-97, and 122-128 (YSFLSSS).

The protein belongs to the bacterial CoaD family. As to quaternary structure, homohexamer. The cofactor is Mg(2+).

Its subcellular location is the cytoplasm. The catalysed reaction is (R)-4'-phosphopantetheine + ATP + H(+) = 3'-dephospho-CoA + diphosphate. It functions in the pathway cofactor biosynthesis; coenzyme A biosynthesis; CoA from (R)-pantothenate: step 4/5. Its function is as follows. Reversibly transfers an adenylyl group from ATP to 4'-phosphopantetheine, yielding dephospho-CoA (dPCoA) and pyrophosphate. The polypeptide is Phosphopantetheine adenylyltransferase (Crocosphaera subtropica (strain ATCC 51142 / BH68) (Cyanothece sp. (strain ATCC 51142))).